The primary structure comprises 506 residues: Maturase K (506 aa).

Belongs to the intron maturase 2 family. MatK subfamily.

It localises to the plastid. It is found in the chloroplast. Its function is as follows. Usually encoded in the trnK tRNA gene intron. Probably assists in splicing its own and other chloroplast group II introns. This is Maturase K from Medicago sativa (Alfalfa).